A 251-amino-acid chain; its full sequence is Imidazole glycerol phosphate synthase subunit HisF (251 aa).

Residues Asp11 and Asp130 contribute to the active site.

This sequence belongs to the HisA/HisF family. As to quaternary structure, heterodimer of HisH and HisF.

The protein localises to the cytoplasm. The enzyme catalyses 5-[(5-phospho-1-deoxy-D-ribulos-1-ylimino)methylamino]-1-(5-phospho-beta-D-ribosyl)imidazole-4-carboxamide + L-glutamine = D-erythro-1-(imidazol-4-yl)glycerol 3-phosphate + 5-amino-1-(5-phospho-beta-D-ribosyl)imidazole-4-carboxamide + L-glutamate + H(+). The protein operates within amino-acid biosynthesis; L-histidine biosynthesis; L-histidine from 5-phospho-alpha-D-ribose 1-diphosphate: step 5/9. Its function is as follows. IGPS catalyzes the conversion of PRFAR and glutamine to IGP, AICAR and glutamate. The HisF subunit catalyzes the cyclization activity that produces IGP and AICAR from PRFAR using the ammonia provided by the HisH subunit. This chain is Imidazole glycerol phosphate synthase subunit HisF, found in Chlorobium chlorochromatii (strain CaD3).